Reading from the N-terminus, the 96-residue chain is UPF0166 protein aq_448 (96 aa).

Belongs to the UPF0166 family.

In Aquifex aeolicus (strain VF5), this protein is UPF0166 protein aq_448.